A 726-amino-acid chain; its full sequence is PWWP domain-containing protein 2 (726 aa).

Residues 1–10 (MSTESERIES) are compositionally biased toward basic and acidic residues. The disordered stretch occupies residues 1–26 (MSTESERIESVSEANASSLEVGNDQM). The segment covering 12–26 (SEANASSLEVGNDQM) has biased composition (polar residues). A PWWP domain is found at 199–260 (DSDLVWAKVR…ASRIKPFRQH (62 aa)). Residues 392-441 (APKISPAEEQSSLVEVSDPEPTKSKQVYTKRRKTNLQTEQSSLVEVSDPD) form a disordered region. The span at 426-435 (NLQTEQSSLV) shows a compositional bias: polar residues. Short sequence motifs (nuclear localization signal) lie at residues 460–467 (KKKEKTLA) and 495–502 (KKRKVVQS). Disordered regions lie at residues 472-545 (EKRV…PQKA) and 568-726 (TRLL…VSAE). Basic residues predominate over residues 494 to 512 (EKKRKVVQSKVPKSTKKIK). The span at 606–634 (SPSTTLSSPHAASVTKTTSGKSNSVSLDH) shows a compositional bias: polar residues. The span at 658–688 (LESRDLKDSSKEQVVHEDKKEAANVADEKSI) shows a compositional bias: basic and acidic residues.

This sequence belongs to the PDP family. As to quaternary structure, interacts with DEK3. Binds to MSI4/FVE and MSI5. Component of the PRC2 (polycomb repressive complex 2) complex which regulates histone methylation on histone H3K27.

The protein resides in the nucleus. Its function is as follows. Together with PDP1, PDP3 and PDP6, interacts with MSI4/FVE and MSI5 to suppress FLC, MAF4 and MAF5 expression by regulating the function of the PRC2 complex and modulating H3K27me3 level, thereby promoting flowering. The chain is PWWP domain-containing protein 2 from Arabidopsis thaliana (Mouse-ear cress).